Here is a 110-residue protein sequence, read N- to C-terminus: PCNA-associated factor (110 aa).

Residue lysine 15 forms a Glycyl lysine isopeptide (Lys-Gly) (interchain with G-Cter in ubiquitin) linkage. The short motif at 23–34 (RKVLGSSTFVTN) is the D-box element. The residue at position 24 (lysine 24) is an N6-acetyllysine; alternate. Lysine 24 is covalently cross-linked (Glycyl lysine isopeptide (Lys-Gly) (interchain with G-Cter in ubiquitin); alternate). A phosphoserine mark is found at serine 28 and serine 71. Positions 28 to 39 (SSTFVTNSSSSS) are enriched in low complexity. The tract at residues 28–110 (SSTFVTNSSS…QPDHRDDENE (83 aa)) is disordered. The PIP-box signature appears at 61-71 (QKGIGEFFRLS). Residues 71 to 80 (SPKESKKENQ) are compositionally biased toward basic and acidic residues. Residues 77-79 (KEN) carry the KEN box motif. Residues 84–96 (EAGTSGLGKAKRK) carry the Initiation motif motif.

Interacts (when monoubiquitinated at Lys-15 and Lys-24) with PCNA. Interacts with isoform 2/p33ING1b of ING1. Interacts with BRCA1. In terms of processing, monoubiquitinated at Lys-15 and Lys-24 during normal S phase, promoting its association with PCNA. Also diubiquitinated at these 2 sites. Following DNA damage, monoubiquitin chains at Lys-15 and Lys-24 are probably extended, leading to disrupt the interaction with PCNA. Polyubiquitinated by the APC/C complex at the mitotic exit, leading to its degradation by the proteasome.

It localises to the nucleus. It is found in the cytoplasm. The protein resides in the perinuclear region. Its function is as follows. PCNA-binding protein that acts as a regulator of DNA repair during DNA replication. Following DNA damage, the interaction with PCNA is disrupted, facilitating the interaction between monoubiquitinated PCNA and the translesion DNA synthesis DNA polymerase eta (POLH) at stalled replisomes, facilitating the bypass of replication-fork-blocking lesions. Also acts as a regulator of centrosome number. In Mus musculus (Mouse), this protein is PCNA-associated factor.